The following is a 356-amino-acid chain: Xylose/arabinose import permease protein XylH (356 aa).

10 consecutive transmembrane segments (helical) span residues 14–34, 41–61, 70–90, 96–116, 126–146, 161–181, 211–231, 242–262, 266–286, and 287–307; these read LFLV…AYFS, IFQY…LMLC, ALAN…YQAI, IVVS…MNGL, LITT…YSGG, VSIL…LILL, VKII…IIQG, FTAD…TSLV, GSLV…NGFN, and ILGI…VVVM.

The protein belongs to the binding-protein-dependent transport system permease family. As to quaternary structure, the complex is composed of two ATP-binding proteins (XylG), two transmembrane proteins (XylH) and a solute-binding protein (XylF).

Its subcellular location is the cell membrane. Part of the ABC transporter complex XylFGH involved in the uptake of xylose and arabinose. Responsible for the translocation of the substrate across the membrane. The sequence is that of Xylose/arabinose import permease protein XylH from Sulfolobus acidocaldarius (strain ATCC 33909 / DSM 639 / JCM 8929 / NBRC 15157 / NCIMB 11770).